A 188-amino-acid chain; its full sequence is Peptide deformylase (188 aa).

The disordered stretch occupies residues 70–90; that stretch reads AEPVACDHDGHHHHHQPTKKE. Residues Cys-113 and His-155 each contribute to the Fe cation site. The active site involves Glu-156. His-159 serves as a coordination point for Fe cation.

The protein belongs to the polypeptide deformylase family. Fe(2+) is required as a cofactor.

It carries out the reaction N-terminal N-formyl-L-methionyl-[peptide] + H2O = N-terminal L-methionyl-[peptide] + formate. Removes the formyl group from the N-terminal Met of newly synthesized proteins. Requires at least a dipeptide for an efficient rate of reaction. N-terminal L-methionine is a prerequisite for activity but the enzyme has broad specificity at other positions. The sequence is that of Peptide deformylase from Novosphingobium aromaticivorans (strain ATCC 700278 / DSM 12444 / CCUG 56034 / CIP 105152 / NBRC 16084 / F199).